The following is a 229-amino-acid chain: ABC transporter I family member 1 (229 aa).

The region spanning Leu-11 to Ile-228 is the ABC transporter domain. Position 43–50 (Gly-43–Ser-50) interacts with ATP.

The protein belongs to the ABC transporter superfamily. ABCI family.

The protein localises to the membrane. The catalysed reaction is heme b(in) + ATP + H2O = heme b(out) + ADP + phosphate + H(+). Its function is as follows. Part of the ABC transporter complex CcmAB involved in the biogenesis of c-type cytochromes; once thought to export heme, this seems not to be the case, but its exact role is uncertain. Responsible for energy coupling to the transport system. The polypeptide is ABC transporter I family member 1 (ABCI1) (Arabidopsis thaliana (Mouse-ear cress)).